The following is a 440-amino-acid chain: 2-alpha-hydroxytaxane 2-O-benzoyltransferase (440 aa).

Catalysis depends on proton acceptor residues His-158 and Asp-367.

Belongs to the plant acyltransferase family.

It carries out the reaction 10-deacetyl-2-debenzoylbaccatin III + benzoyl-CoA = 10-deacetylbaccatin III + CoA. It participates in alkaloid biosynthesis; taxol biosynthesis; baccatin III from 10-deacetyl-2-debenzoylbaccatin III: step 1/2. Functionally, catalyzes the conversion of 2-debenzoyl-7,13-diacetylbaccatin III, a semisynthetic substrate, to 7,13-diacetylbaccatin III. The chain is 2-alpha-hydroxytaxane 2-O-benzoyltransferase from Taxus cuspidata (Japanese yew).